Reading from the N-terminus, the 99-residue chain is Ubiquitin-related modifier 1 homolog (99 aa).

1-thioglycine is present on glycine 99. Residue glycine 99 forms a Glycyl lysine isopeptide (Gly-Lys) (interchain with K-? in acceptor proteins) linkage.

It belongs to the URM1 family. In terms of assembly, interacts with cer. Post-translationally, C-terminal thiocarboxylation occurs in 2 steps, it is first acyl-adenylated (-COAMP) via the hesA/moeB/thiF part of the MOCS3 homolog, then thiocarboxylated (-COSH) via the rhodanese domain of the MOCS3 homolog.

The protein localises to the cytoplasm. It participates in tRNA modification; 5-methoxycarbonylmethyl-2-thiouridine-tRNA biosynthesis. Functionally, acts as a sulfur carrier required for 2-thiolation of mcm(5)S(2)U at tRNA wobble positions of cytosolic tRNA(Lys), tRNA(Glu) and tRNA(Gln). Serves as sulfur donor in tRNA 2-thiolation reaction by being thiocarboxylated (-COSH) at its C-terminus by MOCS3. The sulfur is then transferred to tRNA to form 2-thiolation of mcm(5)S(2)U. Also acts as a ubiquitin-like protein (UBL) that is covalently conjugated via an isopeptide bond to lysine residues of target proteins such as Prx2/Jafrac1, Ciao1, Eip71CD and GILT1. The thiocarboxylated form serves as substrate for conjugation and oxidative stress specifically induces the formation of UBL-protein conjugates. This chain is Ubiquitin-related modifier 1 homolog, found in Drosophila persimilis (Fruit fly).